The chain runs to 185 residues: Elongation factor P (185 aa).

It belongs to the elongation factor P family.

It localises to the cytoplasm. It functions in the pathway protein biosynthesis; polypeptide chain elongation. In terms of biological role, involved in peptide bond synthesis. Stimulates efficient translation and peptide-bond synthesis on native or reconstituted 70S ribosomes in vitro. Probably functions indirectly by altering the affinity of the ribosome for aminoacyl-tRNA, thus increasing their reactivity as acceptors for peptidyl transferase. This chain is Elongation factor P, found in Lysinibacillus sphaericus (strain C3-41).